The primary structure comprises 121 residues: Immunoglobulin kappa variable 2-40 (121 aa).

Residues 1 to 19 form the signal peptide; that stretch reads MRLPAQLLGLLMLWVPGSS. The Ig-like domain maps to 20-121; the sequence is EDIVMTQTPL…YYCMQRIEFP (102 aa). The interval 21–43 is framework-1; the sequence is DIVMTQTPLSLPVTPGEPASISC. The cysteines at positions 43 and 114 are disulfide-linked. The interval 44-60 is complementarity-determining-1; that stretch reads RSSQSLLDSDDGNTYLD. The interval 61–75 is framework-2; sequence WYLQKPGQSPQLLIY. Residues 76–82 are complementarity-determining-2; that stretch reads TLSYRAS. Residues 83-114 form a framework-3 region; that stretch reads GVPDRFSGSGSGTDFTLKISRVEAEDVGVYYC. Residues 115–121 are complementarity-determining-3; sequence MQRIEFP.

As to quaternary structure, immunoglobulins are composed of two identical heavy chains and two identical light chains; disulfide-linked.

It localises to the secreted. The protein localises to the cell membrane. In terms of biological role, v region of the variable domain of immunoglobulin light chains that participates in the antigen recognition. Immunoglobulins, also known as antibodies, are membrane-bound or secreted glycoproteins produced by B lymphocytes. In the recognition phase of humoral immunity, the membrane-bound immunoglobulins serve as receptors which, upon binding of a specific antigen, trigger the clonal expansion and differentiation of B lymphocytes into immunoglobulins-secreting plasma cells. Secreted immunoglobulins mediate the effector phase of humoral immunity, which results in the elimination of bound antigens. The antigen binding site is formed by the variable domain of one heavy chain, together with that of its associated light chain. Thus, each immunoglobulin has two antigen binding sites with remarkable affinity for a particular antigen. The variable domains are assembled by a process called V-(D)-J rearrangement and can then be subjected to somatic hypermutations which, after exposure to antigen and selection, allow affinity maturation for a particular antigen. This chain is Immunoglobulin kappa variable 2-40, found in Homo sapiens (Human).